Here is a 374-residue protein sequence, read N- to C-terminus: Quinolinate synthase (374 aa).

Iminosuccinate contacts are provided by His53 and Ser70. Residue Cys116 participates in [4Fe-4S] cluster binding. Iminosuccinate is bound by residues 148 to 150 and Ser169; that span reads YMN. Cys236 serves as a coordination point for [4Fe-4S] cluster. Iminosuccinate contacts are provided by residues 262 to 264 and Thr279; that span reads HPE. A [4Fe-4S] cluster-binding site is contributed by Cys327.

It belongs to the quinolinate synthase family. Type 3 subfamily. [4Fe-4S] cluster serves as cofactor.

Its subcellular location is the cytoplasm. The enzyme catalyses iminosuccinate + dihydroxyacetone phosphate = quinolinate + phosphate + 2 H2O + H(+). It participates in cofactor biosynthesis; NAD(+) biosynthesis; quinolinate from iminoaspartate: step 1/1. Its function is as follows. Catalyzes the condensation of iminoaspartate with dihydroxyacetone phosphate to form quinolinate. This Haloarcula marismortui (strain ATCC 43049 / DSM 3752 / JCM 8966 / VKM B-1809) (Halobacterium marismortui) protein is Quinolinate synthase.